Consider the following 543-residue polypeptide: Chaperonin GroEL (543 aa).

ATP contacts are provided by residues 29–32 (TLGP), 86–90 (DGTTT), Gly-413, 478–480 (DAL), and Asp-494. The tract at residues 524–543 (PEPEAPAVPAGMPGGMGGMY) is disordered.

Belongs to the chaperonin (HSP60) family. As to quaternary structure, forms a cylinder of 14 subunits composed of two heptameric rings stacked back-to-back. Interacts with the co-chaperonin GroES.

It is found in the cytoplasm. It catalyses the reaction ATP + H2O + a folded polypeptide = ADP + phosphate + an unfolded polypeptide.. Together with its co-chaperonin GroES, plays an essential role in assisting protein folding. The GroEL-GroES system forms a nano-cage that allows encapsulation of the non-native substrate proteins and provides a physical environment optimized to promote and accelerate protein folding. The chain is Chaperonin GroEL from Ruminiclostridium cellulolyticum (strain ATCC 35319 / DSM 5812 / JCM 6584 / H10) (Clostridium cellulolyticum).